The chain runs to 399 residues: MTRRLFTSESVTEGHPDKIADQISDGILDALLAEDPRSRVAVETLITTGQVHVAGEVTTQAYADIPSIVRRTILDIGYDSSRKGFDGASCGVSVSIGSQSADIAQGVDNAFELRTGASESALDAQGAGDQGMMFGFACSETPELMPMPIALAHRLSRRLAQVRREGVVPYLRPDGKTQVTVEYEGLRPVRLNTVLVSSQHAADVSLESLLTPDVREHVIAPEVEGLGLGLDVEDYRLLVNPTGRFEVGGPMGDAGLTGRKIIVDTYGGYARHGGGAFSGKDPSKVDRSAAYAMRWVAKNVVAAGLAERCEAQVAYAIGKAHPVSLFIETFGTETVPVERIEKAVTEVFDLRPAAIIRDLKLTRPIYSQTAAYGHFGRELPDFTWESTDRAADLKSVAGA.

Residue histidine 15 participates in ATP binding. Aspartate 17 serves as a coordination point for Mg(2+). A K(+)-binding site is contributed by glutamate 43. The L-methionine site is built by glutamate 56 and glutamine 99. Positions 99 to 109 (QSADIAQGVDN) are flexible loop. ATP contacts are provided by residues 174 to 176 (DGK), 244 to 245 (RF), aspartate 253, 259 to 260 (RK), alanine 276, and lysine 280. Aspartate 253 is an L-methionine binding site. Lysine 284 contacts L-methionine.

It belongs to the AdoMet synthase family. Homotetramer; dimer of dimers. The cofactor is Mg(2+). K(+) serves as cofactor.

It is found in the cytoplasm. The catalysed reaction is L-methionine + ATP + H2O = S-adenosyl-L-methionine + phosphate + diphosphate. It participates in amino-acid biosynthesis; S-adenosyl-L-methionine biosynthesis; S-adenosyl-L-methionine from L-methionine: step 1/1. In terms of biological role, catalyzes the formation of S-adenosylmethionine (AdoMet) from methionine and ATP. The overall synthetic reaction is composed of two sequential steps, AdoMet formation and the subsequent tripolyphosphate hydrolysis which occurs prior to release of AdoMet from the enzyme. The protein is S-adenosylmethionine synthase of Salinispora tropica (strain ATCC BAA-916 / DSM 44818 / JCM 13857 / NBRC 105044 / CNB-440).